The chain runs to 553 residues: Aminotransferase FUM8 (553 aa).

The first 25 residues, methionine 1–glycine 25, serve as a signal peptide directing secretion. An N-linked (GlcNAc...) asparagine glycan is attached at asparagine 480.

This sequence belongs to the class-II pyridoxal-phosphate-dependent aminotransferase family. BioF subfamily. Pyridoxal 5'-phosphate serves as cofactor.

The protein resides in the endoplasmic reticulum. The protein operates within mycotoxin biosynthesis. Functionally, aminotransferase; part of the gene cluster that mediates the biosynthesis of fumonisins B1 (FB1), B2 (FB2), B3 (FB3), and B4 (FB4), which are carcinogenic mycotoxins. Within the pathway, FUM8 catalyzes the release of the C-18 polyketide chain from the highly reducing polyketide synthase FUM1 by a nucleophilic attack of a carbanion, which is derived from R-carbon of alanine by decarboxylation, on the carbonyl carbon of polyketide acyl chain. The biosynthesis starts with the FUM1-catalyzed carbon chain assembly from one molecule of acetyl-CoA, eight molecules of malonyl-CoA, and two molecules of methionine (in S-adenosyl form). The C18 polyketide chain is released from the enzyme by a nucleophilic attack of a carbanion, which is derived from R-carbon of alanine by decarboxylation, on the carbonyl carbon of polyketide acyl chain. This step is catalyzed by the pyridoxal 5'-phosphate-dependent aminoacyl transferase FUM8. The resultant 3-keto intermediate is then stereospecifically reduced to a 3-hydroxyl product by reductase FUM13. Subsequent oxidations at C-10 by the cytochrome P450 monooxygenase FUM2, C-14 and C-15 by FUM6, FUM12 or FUM15, tricarballylic esterification of the hydroxyl groups on C-14 and C-15 by acyltransferase FUM14, and C-5 hydroxylation by 2-keto-glutarate-dependent dioxygenase FUM3 furnish the biosynthesis of fumonisins. The tricarballylic moieties are most likely derived from the citric acid cycle, and their addition to the carbon backbone may involve FUM7, FUM10, FUM11 and FUM14. This chain is Aminotransferase FUM8, found in Gibberella moniliformis (strain M3125 / FGSC 7600) (Maize ear and stalk rot fungus).